The chain runs to 227 residues: Transcriptional regulatory protein CpxR homolog (227 aa).

Positions 3 to 115 (KLLLVDDDIE…ELIARIKAIL (113 aa)) constitute a Response regulatory domain. A 4-aspartylphosphate modification is found at aspartate 51. A DNA-binding region (ompR/PhoB-type) is located at residues 128–227 (VEILSFDGIT…LRGKGYALVT (100 aa)).

Phosphorylated.

The protein resides in the cytoplasm. Member of a two-component regulatory system. This is Transcriptional regulatory protein CpxR homolog (cpxR) from Haemophilus influenzae (strain ATCC 51907 / DSM 11121 / KW20 / Rd).